The following is a 342-amino-acid chain: Maltose regulon regulatory protein MalI (342 aa).

Positions 7 to 61 (ITIHDVALAAGVSVSTVSLVLSGKGRISTATGERVNAAIEELGFVRNRQASALRG) constitute an HTH lacI-type domain. The H-T-H motif DNA-binding region spans 9-28 (IHDVALAAGVSVSTVSLVLS).

Functionally, repressor for the malX and malY genes. Also regulates its own expression. Binds maltose as an inducer. This Escherichia coli (strain K12) protein is Maltose regulon regulatory protein MalI (malI).